The primary structure comprises 288 residues: 4-diphosphocytidyl-2-C-methyl-D-erythritol kinase (288 aa).

The active site involves Lys10. Pro99–Ser109 serves as a coordination point for ATP. Asp141 is an active-site residue.

This sequence belongs to the GHMP kinase family. IspE subfamily. In terms of assembly, homodimer.

It carries out the reaction 4-CDP-2-C-methyl-D-erythritol + ATP = 4-CDP-2-C-methyl-D-erythritol 2-phosphate + ADP + H(+). Its pathway is isoprenoid biosynthesis; isopentenyl diphosphate biosynthesis via DXP pathway; isopentenyl diphosphate from 1-deoxy-D-xylulose 5-phosphate: step 3/6. Catalyzes the phosphorylation of the position 2 hydroxy group of 4-diphosphocytidyl-2C-methyl-D-erythritol. The sequence is that of 4-diphosphocytidyl-2-C-methyl-D-erythritol kinase from Serratia proteamaculans (strain 568).